The sequence spans 306 residues: Ribonuclease Z (306 aa).

The Zn(2+) site is built by His-61, His-63, Asp-65, His-66, His-137, Asp-207, and His-263. Asp-65 functions as the Proton acceptor in the catalytic mechanism.

The protein belongs to the RNase Z family. As to quaternary structure, homodimer. Requires Zn(2+) as cofactor.

It carries out the reaction Endonucleolytic cleavage of RNA, removing extra 3' nucleotides from tRNA precursor, generating 3' termini of tRNAs. A 3'-hydroxy group is left at the tRNA terminus and a 5'-phosphoryl group is left at the trailer molecule.. In terms of biological role, zinc phosphodiesterase, which displays some tRNA 3'-processing endonuclease activity. Probably involved in tRNA maturation, by removing a 3'-trailer from precursor tRNA. The protein is Ribonuclease Z of Thermococcus sibiricus (strain DSM 12597 / MM 739).